Here is a 935-residue protein sequence, read N- to C-terminus: Isoleucine--tRNA ligase (935 aa).

Residues 58 to 68 carry the 'HIGH' region motif; sequence PYANGSIHVGH. E558 lines the L-isoleucyl-5'-AMP pocket. The short motif at 599-603 is the 'KMSKS' region element; the sequence is KMSKS. Residue K602 coordinates ATP. Residues C897, C900, C917, and C920 each contribute to the Zn(2+) site.

Belongs to the class-I aminoacyl-tRNA synthetase family. IleS type 1 subfamily. Monomer. The cofactor is Zn(2+).

It is found in the cytoplasm. The enzyme catalyses tRNA(Ile) + L-isoleucine + ATP = L-isoleucyl-tRNA(Ile) + AMP + diphosphate. In terms of biological role, catalyzes the attachment of isoleucine to tRNA(Ile). As IleRS can inadvertently accommodate and process structurally similar amino acids such as valine, to avoid such errors it has two additional distinct tRNA(Ile)-dependent editing activities. One activity is designated as 'pretransfer' editing and involves the hydrolysis of activated Val-AMP. The other activity is designated 'posttransfer' editing and involves deacylation of mischarged Val-tRNA(Ile). The polypeptide is Isoleucine--tRNA ligase (Francisella philomiragia subsp. philomiragia (strain ATCC 25017 / CCUG 19701 / FSC 153 / O#319-036)).